The sequence spans 542 residues: Chaperonin GroEL (542 aa).

ATP contacts are provided by residues 29–32, 86–90, G413, and D494; these read TLGP and DGTTT.

It belongs to the chaperonin (HSP60) family. In terms of assembly, forms a cylinder of 14 subunits composed of two heptameric rings stacked back-to-back. Interacts with the co-chaperonin GroES.

Its subcellular location is the cytoplasm. It catalyses the reaction ATP + H2O + a folded polypeptide = ADP + phosphate + an unfolded polypeptide.. In terms of biological role, together with its co-chaperonin GroES, plays an essential role in assisting protein folding. The GroEL-GroES system forms a nano-cage that allows encapsulation of the non-native substrate proteins and provides a physical environment optimized to promote and accelerate protein folding. This chain is Chaperonin GroEL, found in Endomicrobium trichonymphae.